A 163-amino-acid polypeptide reads, in one-letter code: Crossover junction endodeoxyribonuclease RuvC (163 aa).

Residues aspartate 4, glutamate 65, and aspartate 138 contribute to the active site. The Mg(2+) site is built by aspartate 4, glutamate 65, and aspartate 138.

The protein belongs to the RuvC family. In terms of assembly, homodimer which binds Holliday junction (HJ) DNA. The HJ becomes 2-fold symmetrical on binding to RuvC with unstacked arms; it has a different conformation from HJ DNA in complex with RuvA. In the full resolvosome a probable DNA-RuvA(4)-RuvB(12)-RuvC(2) complex forms which resolves the HJ. The cofactor is Mg(2+).

It is found in the cytoplasm. The enzyme catalyses Endonucleolytic cleavage at a junction such as a reciprocal single-stranded crossover between two homologous DNA duplexes (Holliday junction).. Its function is as follows. The RuvA-RuvB-RuvC complex processes Holliday junction (HJ) DNA during genetic recombination and DNA repair. Endonuclease that resolves HJ intermediates. Cleaves cruciform DNA by making single-stranded nicks across the HJ at symmetrical positions within the homologous arms, yielding a 5'-phosphate and a 3'-hydroxyl group; requires a central core of homology in the junction. The consensus cleavage sequence is 5'-(A/T)TT(C/G)-3'. Cleavage occurs on the 3'-side of the TT dinucleotide at the point of strand exchange. HJ branch migration catalyzed by RuvA-RuvB allows RuvC to scan DNA until it finds its consensus sequence, where it cleaves and resolves the cruciform DNA. The chain is Crossover junction endodeoxyribonuclease RuvC from Corynebacterium jeikeium (strain K411).